Consider the following 200-residue polypeptide: dITP/XTP pyrophosphatase (200 aa).

Residue 8–13 (TRNAGK) participates in substrate binding. Asp-72 (proton acceptor) is an active-site residue. Asp-72 lines the Mg(2+) pocket. Residues Ser-73, 155 to 158 (FGYD), Lys-178, and 183 to 184 (HR) each bind substrate.

This sequence belongs to the HAM1 NTPase family. In terms of assembly, homodimer. Requires Mg(2+) as cofactor.

The catalysed reaction is XTP + H2O = XMP + diphosphate + H(+). The enzyme catalyses dITP + H2O = dIMP + diphosphate + H(+). It catalyses the reaction ITP + H2O = IMP + diphosphate + H(+). Functionally, pyrophosphatase that catalyzes the hydrolysis of nucleoside triphosphates to their monophosphate derivatives, with a high preference for the non-canonical purine nucleotides XTP (xanthosine triphosphate), dITP (deoxyinosine triphosphate) and ITP. Seems to function as a house-cleaning enzyme that removes non-canonical purine nucleotides from the nucleotide pool, thus preventing their incorporation into DNA/RNA and avoiding chromosomal lesions. This Streptomyces coelicolor (strain ATCC BAA-471 / A3(2) / M145) protein is dITP/XTP pyrophosphatase.